Here is a 343-residue protein sequence, read N- to C-terminus: Protein RecA (343 aa).

66–73 lines the ATP pocket; that stretch reads GPESSGKT.

Belongs to the RecA family.

The protein localises to the cytoplasm. Functionally, can catalyze the hydrolysis of ATP in the presence of single-stranded DNA, the ATP-dependent uptake of single-stranded DNA by duplex DNA, and the ATP-dependent hybridization of homologous single-stranded DNAs. It interacts with LexA causing its activation and leading to its autocatalytic cleavage. In Rickettsia bellii (strain RML369-C), this protein is Protein RecA.